The following is a 499-amino-acid chain: Flotillin-like protein 2 (499 aa).

Residue Cys-37 is the site of S-palmitoyl cysteine attachment. A coiled-coil region spans residues Leu-243 to Glu-319.

It belongs to the band 7/mec-2 family. Flotillin subfamily. May be palmitoylated.

It localises to the cell membrane. The protein resides in the membrane. Its subcellular location is the caveola. Its function is as follows. May act as a scaffolding protein within caveolar membranes, functionally participating in formation of caveolae or caveolae-like vesicles. In Oryza sativa subsp. japonica (Rice), this protein is Flotillin-like protein 2 (FLOT2).